We begin with the raw amino-acid sequence, 1623 residues long: ABC transporter C family member 2 (1623 aa).

9 helical membrane passes run 37-57 (FVLG…IWLA), 76-96 (FLAL…IMGI), 109-129 (FEAF…VMIL), 145-165 (FAVI…LSVK), 172-192 (VLYL…LLFM), 336-356 (AWMG…GVLC), 440-460 (VASL…TVII), 527-547 (FILN…FTLL), and 557-577 (FTSL…PNII). The ABC transmembrane type-1 1 domain maps to 302–582 (FWWGGFWKIG…LPNIITQVVN (281 aa)). The ABC transporter 1 domain occupies 614–838 (ISIRNGYFSW…GPLFQRLMEN (225 aa)). 649 to 656 (GSTGEGKT) contributes to the ATP binding site. Residues 842–890 (VEEYSEENGEAEADQTAEQPVANGNTNGLQMDGSDDKKSKEGNKKGGKS) form a disordered region. The segment covering 845–856 (YSEENGEAEADQ) has biased composition (acidic residues). The span at 857–870 (TAEQPVANGNTNGL) shows a compositional bias: polar residues. Over residues 875–885 (SDDKKSKEGNK) the composition is skewed to basic and acidic residues. 6 helical membrane passes run 914–934 (ALGG…TEVF), 955–975 (GPLF…LVTL), 1032–1054 (AVFV…LIGI), 1058–1077 (LSLW…YLYY), 1143–1163 (LGIR…SFAV), and 1177–1197 (STMG…TGVL). In terms of domain architecture, ABC transmembrane type-1 2 spans 921 to 1205 (VMMLLLCYVL…VLRLASLAEN (285 aa)). Positions 1236–1251 (WPSSGSIKFEDVVLRY) are interaction with calmodulin and FKP42/TWD1. Positions 1242–1476 (IKFEDVVLRY…EGSSFSKMVQ (235 aa)) constitute an ABC transporter 2 domain. 1276-1283 (GRTGAGKS) serves as a coordination point for ATP.

The protein belongs to the ABC transporter superfamily. ABCC family. Conjugate transporter (TC 3.A.1.208) subfamily. Interacts with FKBP42/TWD1 and probably with calmodulin (CaM). As to expression, ubiquitous, at low levels.

The protein resides in the vacuole membrane. The enzyme catalyses ATP + H2O + xenobioticSide 1 = ADP + phosphate + xenobioticSide 2.. Its activity is regulated as follows. Reciprocal promotion of DNP-GS and E(2)17betaG uptake. E(2)17betaG uptake is also stimulated by GSH and S-methyl-glutathione (S-methyl-GS), and, to a lower extent, by GSSG and C3G-GS. Metolachlor-GS and decyl-GS slightly inhibit E(2)17betaG uptake. In terms of biological role, pump for glutathione S-conjugates. Mediates the transport of S-conjugates such as GSH, S-(2,4-dinitrophenyl)-glutathione (DNP-GS), GSSG, cyanidin 3-glucoside-GS (C3G-GS) and metolachlor-GS (MOC-GS), glucuronides such as 17-beta-estradiol 17-(beta-D-glucuronide) (E(2)17betaG), and of the chlorophyll catabolite such as B.napus nonfluorescent chlorophyll catabolite (Bn-NCC-1). In Arabidopsis thaliana (Mouse-ear cress), this protein is ABC transporter C family member 2 (ABCC2).